The following is a 124-amino-acid chain: Ribonuclease pancreatic (124 aa).

Over residues 1-13 (KESAAAKFERQHM) the composition is skewed to basic and acidic residues. Positions 1-24 (KESAAAKFERQHMDPSTSSASSSN) are disordered. Residues K7 and R10 each coordinate substrate. H12 functions as the Proton acceptor in the catalytic mechanism. Intrachain disulfides connect C26–C84, C40–C95, C58–C110, and C65–C72. Substrate is bound by residues 41–45 (KPVNT), K66, and R85. The Proton donor role is filled by H119.

The protein belongs to the pancreatic ribonuclease family. In terms of assembly, monomer. Interacts with and forms tight 1:1 complexes with RNH1. Dimerization of two such complexes may occur. Interaction with RNH1 inhibits this protein. As to expression, pancreas.

The protein resides in the secreted. The catalysed reaction is an [RNA] containing cytidine + H2O = an [RNA]-3'-cytidine-3'-phosphate + a 5'-hydroxy-ribonucleotide-3'-[RNA].. The enzyme catalyses an [RNA] containing uridine + H2O = an [RNA]-3'-uridine-3'-phosphate + a 5'-hydroxy-ribonucleotide-3'-[RNA].. In terms of biological role, endonuclease that catalyzes the cleavage of RNA on the 3' side of pyrimidine nucleotides. Acts on single-stranded and double-stranded RNA. In Cervus elaphus (Red deer), this protein is Ribonuclease pancreatic (RNASE1).